A 363-amino-acid chain; its full sequence is Histidinol-phosphate aminotransferase (363 aa).

Residue K218 is modified to N6-(pyridoxal phosphate)lysine.

It belongs to the class-II pyridoxal-phosphate-dependent aminotransferase family. Histidinol-phosphate aminotransferase subfamily. As to quaternary structure, homodimer. Pyridoxal 5'-phosphate serves as cofactor.

It carries out the reaction L-histidinol phosphate + 2-oxoglutarate = 3-(imidazol-4-yl)-2-oxopropyl phosphate + L-glutamate. It participates in amino-acid biosynthesis; L-histidine biosynthesis; L-histidine from 5-phospho-alpha-D-ribose 1-diphosphate: step 7/9. The chain is Histidinol-phosphate aminotransferase from Xanthomonas oryzae pv. oryzae (strain MAFF 311018).